We begin with the raw amino-acid sequence, 303 residues long: UDP-N-acetylenolpyruvoylglucosamine reductase (303 aa).

Residues 30–196 form the FAD-binding PCMH-type domain; it reads IGGPADLLII…LEAVFKLKQD (167 aa). Arg174 is an active-site residue. The active-site Proton donor is Ser225. Glu295 is an active-site residue.

It belongs to the MurB family. It depends on FAD as a cofactor.

The protein resides in the cytoplasm. The enzyme catalyses UDP-N-acetyl-alpha-D-muramate + NADP(+) = UDP-N-acetyl-3-O-(1-carboxyvinyl)-alpha-D-glucosamine + NADPH + H(+). Its pathway is cell wall biogenesis; peptidoglycan biosynthesis. In terms of biological role, cell wall formation. The polypeptide is UDP-N-acetylenolpyruvoylglucosamine reductase (Bacillus pumilus (strain SAFR-032)).